A 423-amino-acid polypeptide reads, in one-letter code: Histidine--tRNA ligase (423 aa).

Belongs to the class-II aminoacyl-tRNA synthetase family. Homodimer.

The protein resides in the cytoplasm. The enzyme catalyses tRNA(His) + L-histidine + ATP = L-histidyl-tRNA(His) + AMP + diphosphate + H(+). The protein is Histidine--tRNA ligase of Moorella thermoacetica (strain ATCC 39073 / JCM 9320).